The chain runs to 85 residues: Makatoxin-2 (85 aa).

Positions 1-19 (MNYLIVISFALLLMTSVES) are cleaved as a signal peptide. An LCN-type CS-alpha/beta domain is found at 21–83 (RDAYIADSEN…VPIRIPGPCR (63 aa)). Intrachain disulfides connect cysteine 31–cysteine 82, cysteine 35–cysteine 55, cysteine 41–cysteine 65, and cysteine 45–cysteine 67.

The protein belongs to the long (4 C-C) scorpion toxin superfamily. Sodium channel inhibitor family. Alpha subfamily. Expressed by the venom gland.

Its subcellular location is the secreted. In terms of biological role, this protein markedly relaxes the rat carbachol-precontracted anococcygeus muscle. This relaxation is inhibited by the inhibitor of nitric oxide (NO) synthase, N-nitro-L-arginine methyl ester (L-NAME), suggesting that the response induced by this protein is NO-mediated. The protein is Makatoxin-2 of Olivierus martensii (Manchurian scorpion).